A 750-amino-acid polypeptide reads, in one-letter code: MDGGGSSSWTHVSKNLIERRAVKGCLLPTPSDVMDAAVMALKDVTENIVGQQLFSVDRTNALSVIHTNEVPESIIATAIARDTSRDYLREYEGAAKCNLAATDLSHDEMWEVVIKRYWRYLRESSGAEVVDRGAVGQATQSVLSVLLLQSTFGKKRLSKNPFKHKGPNVGYKSNLEDLRSAFTKIEKYMYYMRPNDPMTKSEDTELRLHELLAYVTTCYRWLLWFMDLTDAKVLRNIDKGPVITHGPRESRPPDELVRRHLKSGPAISAGTGVALTLSTATADALIVLLRMSVSWTSHSWKSNTHGVTGAIVAAVELVTLIHHHLQYIINTVFAGYVCWLDGGVENSYLNSALRSQGRFDHFVGKLVPIMATLSWANMEKGTVMWFKYALAKSIVCHGSPTQHYLTVLESIASKRTGACPPQGSTFGRNPSGFPGQFCCPPQGPLPAPPNSKTRGTFRRCRPGSLRSSRQLPTSPPSNIVSPRTNPAIEGSTAAKNVQGAETIQVRSSGEFNDCIWYINGAYPHQRSDSSSSDNSTCSSTETQYITLPSTPSPTGDVVYTNPLLGPDEEVDASPQPVDPMSDYSAPKNPDYMRPRSTLVEEVWQLRDSDYTPYMRPSRPSRAGRSRVRVEDQTLEPSSPAGCNPPANSPENDSDDAAVDSPPISPEVVYGTFRPRAKCVYDQYGLTALAALSASRAKARRTRPGPTQPDVCRERDEESAEPRHDGFIRRTMSTTGPPRKHPDQTERVSSL.

Disordered regions lie at residues 437-484 (FCCP…SPRT), 525-593 (QRSD…DYMR), 610-669 (YTPY…EVVY), and 692-750 (SASR…VSSL). Over residues 465-484 (LRSSRQLPTSPPSNIVSPRT) the composition is skewed to polar residues. Low complexity predominate over residues 528–540 (DSSSSDNSTCSST). Polar residues predominate over residues 541–553 (ETQYITLPSTPSP). Basic and acidic residues-rich tracts occupy residues 710–727 (VCRERDEESAEPRHDGFI) and 739–750 (KHPDQTERVSSL).

Belongs to the herpesviridae HHV-1 VP11/12 protein family.

It is found in the virion tegument. Its subcellular location is the host cell membrane. In terms of biological role, modulates alpha trans-inducing factor-dependent activation of alpha genes. The chain is Tegument protein UL46 homolog from Equine herpesvirus 1 (strain V592) (EHV-1).